A 170-amino-acid polypeptide reads, in one-letter code: Acetyl-CoA decarbonylase/synthase complex subunit epsilon 1 (170 aa).

This sequence belongs to the CdhB family. Heterotetramer of two alpha and two epsilon subunits. The ACDS complex is made up of alpha, epsilon, beta, gamma and delta subunits with a probable stoichiometry of (alpha(2)epsilon(2))(4)-beta(8)-(gamma(1)delta(1))(8).

Its pathway is one-carbon metabolism; methanogenesis from acetate. Part of a complex that catalyzes the reversible cleavage of acetyl-CoA, allowing growth on acetate as sole source of carbon and energy. The alpha-epsilon subcomponent functions as a carbon monoxide dehydrogenase. The precise role of the epsilon subunit is unclear; it may have a stabilizing role within the alpha(2)epsilon(2) component and/or be involved in electron transfer to FAD during a potential FAD-mediated CO oxidation. In Methanosarcina barkeri (strain Fusaro / DSM 804), this protein is Acetyl-CoA decarbonylase/synthase complex subunit epsilon 1.